The sequence spans 137 residues: Small ribosomal subunit protein uS9c (137 aa).

It belongs to the universal ribosomal protein uS9 family.

It localises to the plastid. The protein resides in the chloroplast. This chain is Small ribosomal subunit protein uS9c (rps9), found in Gracilaria tenuistipitata var. liui (Red alga).